A 571-amino-acid polypeptide reads, in one-letter code: Hemagglutinin-neuraminidase (571 aa).

Residues 1–25 (MEDYSNLSLKSIPKRTCRIIFRTAT) are Intravirion-facing. A helical transmembrane segment spans residues 26–46 (ILGICTLIVLCSSILHEIIHL). The Virion surface portion of the chain corresponds to 47-571 (DVSSGLMDSD…IIPFLRELIP (525 aa)). Disulfide bonds link Cys-166–Cys-190, Cys-180–Cys-241, and Cys-232–Cys-245. The tract at residues 228–233 (NRKSCS) is important for neuraminidase activity. The involved in neuraminidase activity stretch occupies residues 228–233 (NRKSCS). Asn-272, Asn-284, Asn-335, and Asn-341 each carry an N-linked (GlcNAc...) asparagine; by host glycan. 3 disulfides stabilise this stretch: Cys-338-Cys-459, Cys-370-Cys-380, and Cys-453-Cys-463. An N-linked (GlcNAc...) asparagine; by host glycan is attached at Asn-386. The segment at 393–398 (GAEGRL) is sialic receptor-binding site. Asn-454, Asn-498, Asn-501, Asn-517, and Asn-522 each carry an N-linked (GlcNAc...) asparagine; by host glycan. An intrachain disulfide couples Cys-535 to Cys-546.

The protein belongs to the paramyxoviruses hemagglutinin-neuraminidase family. Homotetramer; composed of disulfide-linked homodimers. Interacts with F protein trimer.

The protein localises to the virion membrane. Its subcellular location is the host cell membrane. It catalyses the reaction Hydrolysis of alpha-(2-&gt;3)-, alpha-(2-&gt;6)-, alpha-(2-&gt;8)- glycosidic linkages of terminal sialic acid residues in oligosaccharides, glycoproteins, glycolipids, colominic acid and synthetic substrates.. In terms of biological role, attaches the virus to sialic acid-containing cell receptors and thereby initiating infection. Binding of HN protein to the receptor induces a conformational change that allows the F protein to trigger virion/cell membranes fusion. Neuraminidase activity ensures the efficient spread of the virus by dissociating the mature virions from the neuraminic acid containing glycoproteins. This Human parainfluenza 2 virus (strain Toshiba) (HPIV-2) protein is Hemagglutinin-neuraminidase (HN).